The sequence spans 86 residues: Neurotoxin 3FTx-LT (86 aa).

The signal sequence occupies residues 1–21; it reads MKTLLLTLVVVTIVCLDLGYT. Cystine bridges form between cysteine 24–cysteine 45, cysteine 27–cysteine 32, cysteine 38–cysteine 63, cysteine 67–cysteine 78, and cysteine 79–cysteine 84.

As to expression, expressed by the venom gland.

The protein localises to the secreted. Its function is as follows. Binds with low affinity to muscular (alpha-1-beta-1-delta-epsilon/CHRNA1-CHRNB1-CHRND-CHRNE) and very low affinity to neuronal (alpha-7/CHRNA7) nicotinic acetylcholine receptor (nAChR). This chain is Neurotoxin 3FTx-LT, found in Bungarus fasciatus (Banded krait).